The sequence spans 171 residues: Putative phosphoesterase BPUM_1117 (171 aa).

His-34 functions as the Proton donor in the catalytic mechanism. 2 consecutive short sequence motifs (HXTX) follow at residues 34–37 and 115–118; these read HLTL and HVTV. His-115 acts as the Proton acceptor in catalysis.

Belongs to the 2H phosphoesterase superfamily. YjcG family.

The polypeptide is Putative phosphoesterase BPUM_1117 (Bacillus pumilus (strain SAFR-032)).